Here is a 704-residue protein sequence, read N- to C-terminus: Elongation factor G (704 aa).

The region spanning 10–290 (NKVRNIGIMA…AVVDFLPSPL (281 aa)) is the tr-type G domain. GTP contacts are provided by residues 19–26 (AHIDAGKT), 83–87 (DTPGH), and 137–140 (NKMD). The tract at residues 293–313 (PPMIGHDPRNEETEMTRKPST) is disordered. The segment covering 298–313 (HDPRNEETEMTRKPST) has biased composition (basic and acidic residues).

The protein belongs to the TRAFAC class translation factor GTPase superfamily. Classic translation factor GTPase family. EF-G/EF-2 subfamily.

The protein resides in the cytoplasm. In terms of biological role, catalyzes the GTP-dependent ribosomal translocation step during translation elongation. During this step, the ribosome changes from the pre-translocational (PRE) to the post-translocational (POST) state as the newly formed A-site-bound peptidyl-tRNA and P-site-bound deacylated tRNA move to the P and E sites, respectively. Catalyzes the coordinated movement of the two tRNA molecules, the mRNA and conformational changes in the ribosome. The polypeptide is Elongation factor G (Renibacterium salmoninarum (strain ATCC 33209 / DSM 20767 / JCM 11484 / NBRC 15589 / NCIMB 2235)).